Reading from the N-terminus, the 387-residue chain is Phosphoglycerate kinase (387 aa).

Residues 21–23, arginine 36, and 59–62 each bind substrate; these read DLN and HLGR. The residue at position 84 (lysine 84) is an N6-acetyllysine. Positions 113 and 146 each coordinate substrate. ATP-binding positions include lysine 197, glutamate 314, and 340 to 343; that span reads GGDT.

Belongs to the phosphoglycerate kinase family. In terms of assembly, monomer.

It localises to the cytoplasm. It catalyses the reaction (2R)-3-phosphoglycerate + ATP = (2R)-3-phospho-glyceroyl phosphate + ADP. Its pathway is carbohydrate degradation; glycolysis; pyruvate from D-glyceraldehyde 3-phosphate: step 2/5. The sequence is that of Phosphoglycerate kinase from Escherichia coli O139:H28 (strain E24377A / ETEC).